A 219-amino-acid polypeptide reads, in one-letter code: Cytidylate kinase (219 aa).

10–18 is an ATP binding site; that stretch reads GPAAAGKST.

The protein belongs to the cytidylate kinase family. Type 1 subfamily.

It is found in the cytoplasm. It carries out the reaction CMP + ATP = CDP + ADP. The catalysed reaction is dCMP + ATP = dCDP + ADP. In Staphylococcus saprophyticus subsp. saprophyticus (strain ATCC 15305 / DSM 20229 / NCIMB 8711 / NCTC 7292 / S-41), this protein is Cytidylate kinase.